The chain runs to 382 residues: Succinyl-diaminopimelate desuccinylase (382 aa).

Residue His-72 participates in Zn(2+) binding. The active site involves Asp-74. Position 105 (Asp-105) interacts with Zn(2+). The active-site Proton acceptor is Glu-139. Zn(2+) contacts are provided by Glu-140, Glu-168, and His-354.

This sequence belongs to the peptidase M20A family. DapE subfamily. As to quaternary structure, homodimer. Zn(2+) is required as a cofactor. Co(2+) serves as cofactor.

The enzyme catalyses N-succinyl-(2S,6S)-2,6-diaminopimelate + H2O = (2S,6S)-2,6-diaminopimelate + succinate. It functions in the pathway amino-acid biosynthesis; L-lysine biosynthesis via DAP pathway; LL-2,6-diaminopimelate from (S)-tetrahydrodipicolinate (succinylase route): step 3/3. Its function is as follows. Catalyzes the hydrolysis of N-succinyl-L,L-diaminopimelic acid (SDAP), forming succinate and LL-2,6-diaminopimelate (DAP), an intermediate involved in the bacterial biosynthesis of lysine and meso-diaminopimelic acid, an essential component of bacterial cell walls. The protein is Succinyl-diaminopimelate desuccinylase of Shewanella amazonensis (strain ATCC BAA-1098 / SB2B).